The sequence spans 331 residues: Cathepsin 7 (331 aa).

The first 17 residues, 1–17 (MTVAVFLAILCLRAALA), serve as a signal peptide directing secretion. A propeptide spans 18–111 (APRPDYSLDA…GKHIQKRNVK (94 aa)) (activation peptide). Residues 33-50 (KRNNAKTYSPEEEKQRRA) carry the Nuclear localization signal motif. Residue Asn-72 is glycosylated (N-linked (GlcNAc...) asparagine). Cystine bridges form between Cys-133/Cys-176, Cys-167/Cys-209, and Cys-267/Cys-320. Residue Cys-136 is part of the active site. Residues His-274 and Asn-298 contribute to the active site.

This sequence belongs to the peptidase C1 family.

The protein localises to the endosome. It localises to the lysosome. It is found in the cytoplasm. The protein resides in the perinuclear region. Its subcellular location is the golgi apparatus. The protein localises to the nucleus. It localises to the secreted. It is found in the extracellular space. Involved in trophoblast cell proliferation and differentiation probably by affecting mitotic cell cycle progression. Proteolytic activity and nuclear localization are essential for its role in cell cycle progression. The protein is Cathepsin 7 (Cts7) of Rattus norvegicus (Rat).